The primary structure comprises 416 residues: Thyroid hormone receptor alpha (416 aa).

The span at 1 to 13 (MEPMSNKQDSNSS) shows a compositional bias: polar residues. The segment at 1 to 37 (MEPMSNKQDSNSSEGDEKGWPDVPKRKRKNSQCSMKS) is disordered. The modulating stretch occupies residues 1-58 (MEPMSNKQDSNSSEGDEKGWPDVPKRKRKNSQCSMKSMSALSVSVPGYIPSYLEKDEP). A compositionally biased stretch (basic and acidic residues) spans 15-24 (GDEKGWPDVP). Residues Cys-59, Cys-62, Cys-76, Cys-79, Cys-97, Cys-103, Cys-113, and Cys-116 each contribute to the Zn(2+) site. NR C4-type zinc fingers lie at residues 59-79 (CVVCGDKATGYHYRCITCEGC) and 97-121 (CKYEGCCIIDKITRNQCQLCRFKKC). Positions 59–133 (CVVCGDKATG…VGMAMDLVLD (75 aa)) form a DNA-binding region, nuclear receptor. Residues 169-413 (AEWELIRMAT…PPLFLEVFED (245 aa)) form the NR LBD domain. Arg-234 contributes to the 3,3',5-triiodo-L-thyronine binding site.

Belongs to the nuclear hormone receptor family. NR1 subfamily.

It is found in the nucleus. Functionally, nuclear hormone receptor that can act as a repressor or activator of transcription. High affinity receptor for thyroid hormones, including triiodothyronine and thyroxine. This is Thyroid hormone receptor alpha (thra) from Hippoglossus hippoglossus (Atlantic halibut).